The chain runs to 523 residues: Coatomer subunit delta-2 (523 aa).

The interval 218 to 243 (DSFASKPKGRPSAAATAPGKGLGMKL) is disordered. An MHD domain is found at 282–523 (SDPVTVTIEE…RLVTANYQVV (242 aa)).

Belongs to the adaptor complexes medium subunit family. Delta-COP subfamily. In terms of assembly, oligomeric complex that consists of at least the alpha, beta, beta', gamma, delta, epsilon and zeta subunits.

The protein resides in the cytoplasm. The protein localises to the golgi apparatus membrane. It is found in the cytoplasmic vesicle. Its subcellular location is the COPI-coated vesicle membrane. Functionally, the coatomer is a cytosolic protein complex that binds to dilysine motifs and reversibly associates with Golgi non-clathrin-coated vesicles, which further mediate biosynthetic protein transport from the ER, via the Golgi up to the trans Golgi network. Coatomer complex is required for budding from Golgi membranes, and is essential for the retrograde Golgi-to-ER transport of dilysine-tagged proteins. This is Coatomer subunit delta-2 from Oryza sativa subsp. japonica (Rice).